The chain runs to 292 residues: 2-dehydro-3-deoxygalactonokinase (292 aa).

Belongs to the DgoK family.

It carries out the reaction 2-dehydro-3-deoxy-D-galactonate + ATP = 2-dehydro-3-deoxy-6-phospho-D-galactonate + ADP + H(+). The protein operates within carbohydrate acid metabolism; D-galactonate degradation; D-glyceraldehyde 3-phosphate and pyruvate from D-galactonate: step 2/3. In Escherichia coli (strain K12), this protein is 2-dehydro-3-deoxygalactonokinase (dgoK).